The primary structure comprises 876 residues: Alanine--tRNA ligase (876 aa).

Positions 568, 572, 670, and 674 each coordinate Zn(2+).

This sequence belongs to the class-II aminoacyl-tRNA synthetase family. Zn(2+) serves as cofactor.

The protein resides in the cytoplasm. The catalysed reaction is tRNA(Ala) + L-alanine + ATP = L-alanyl-tRNA(Ala) + AMP + diphosphate. Functionally, catalyzes the attachment of alanine to tRNA(Ala) in a two-step reaction: alanine is first activated by ATP to form Ala-AMP and then transferred to the acceptor end of tRNA(Ala). Also edits incorrectly charged Ser-tRNA(Ala) and Gly-tRNA(Ala) via its editing domain. This Geobacter metallireducens (strain ATCC 53774 / DSM 7210 / GS-15) protein is Alanine--tRNA ligase.